The sequence spans 476 residues: Ribulose bisphosphate carboxylase large chain (476 aa).

Substrate is bound by residues asparagine 124 and threonine 174. The active-site Proton acceptor is the lysine 176. Lysine 178 lines the substrate pocket. Residues lysine 202, aspartate 204, and glutamate 205 each coordinate Mg(2+). N6-carboxylysine is present on lysine 202. Catalysis depends on histidine 295, which acts as the Proton acceptor. Arginine 296, histidine 328, and serine 380 together coordinate substrate.

This sequence belongs to the RuBisCO large chain family. Type I subfamily. As to quaternary structure, heterohexadecamer of 8 large chains and 8 small chains; disulfide-linked. The disulfide link is formed within the large subunit homodimers. Requires Mg(2+) as cofactor. The disulfide bond which can form in the large chain dimeric partners within the hexadecamer appears to be associated with oxidative stress and protein turnover.

It localises to the carboxysome. It carries out the reaction 2 (2R)-3-phosphoglycerate + 2 H(+) = D-ribulose 1,5-bisphosphate + CO2 + H2O. It catalyses the reaction D-ribulose 1,5-bisphosphate + O2 = 2-phosphoglycolate + (2R)-3-phosphoglycerate + 2 H(+). RuBisCO catalyzes two reactions: the carboxylation of D-ribulose 1,5-bisphosphate, the primary event in carbon dioxide fixation, as well as the oxidative fragmentation of the pentose substrate in the photorespiration process. Both reactions occur simultaneously and in competition at the same active site. This is Ribulose bisphosphate carboxylase large chain from Acaryochloris marina (strain MBIC 11017).